A 415-amino-acid polypeptide reads, in one-letter code: uncharacterized protein (415 aa).

His-88 is a Zn(2+) binding site. Asp-90 is a catalytic residue. Position 121 (Asp-121) interacts with Zn(2+). The Proton acceptor role is filled by Glu-155. The Zn(2+) site is built by Glu-156, Asp-185, and His-392.

Belongs to the peptidase M20A family. The cofactor is Zn(2+). It depends on Co(2+) as a cofactor.

This is an uncharacterized protein from Methanococcus maripaludis (strain DSM 14266 / JCM 13030 / NBRC 101832 / S2 / LL).